The chain runs to 147 residues: MAIERTLSIIKPDGVEKGIIGKIIGRFEEKGLKPVAIRLTQLSKAEAEGFYAVHKARPFFADLVKFMTSGPVVLMVLEGENAVARNREIMGATDPKKADAGTIRKDFATDIEKNTVHGSDSVENAKIEVSYFFPEVQVHAYEWKKLA.

Lys-11, Phe-59, Arg-87, Thr-93, Arg-104, and Asn-114 together coordinate ATP. The active-site Pros-phosphohistidine intermediate is the His-117.

The protein belongs to the NDK family. As to quaternary structure, homotetramer. It depends on Mg(2+) as a cofactor.

Its subcellular location is the cytoplasm. It carries out the reaction a 2'-deoxyribonucleoside 5'-diphosphate + ATP = a 2'-deoxyribonucleoside 5'-triphosphate + ADP. It catalyses the reaction a ribonucleoside 5'-diphosphate + ATP = a ribonucleoside 5'-triphosphate + ADP. In terms of biological role, major role in the synthesis of nucleoside triphosphates other than ATP. The ATP gamma phosphate is transferred to the NDP beta phosphate via a ping-pong mechanism, using a phosphorylated active-site intermediate. This is Nucleoside diphosphate kinase from Anaeromyxobacter dehalogenans (strain 2CP-C).